The sequence spans 1070 residues: Phosphatidylinositol 4,5-bisphosphate 3-kinase catalytic subunit beta isoform (1070 aa).

One can recognise a PI3K-ABD domain in the interval 26-115 (SDGSISVDFL…LPVLKLVTRS (90 aa)). The PI3K-RBD domain maps to 194 to 285 (GGKLVVAVHF…RTLPHFILVE (92 aa)). S324 is modified (phosphoserine). The C2 PI3K-type domain maps to 327-496 (WGNNNPFQIV…NATALHIKFP (170 aa)). Residues 410 to 418 (KVKTKKSTK) carry the Nuclear localization signal (NLS) motif. The region spanning 524 to 701 (ANVSSRGGKK…GVILEAYCRG (178 aa)) is the PIK helical domain. A PI3K/PI4K catalytic domain is found at 772–1053 (YVEKCRYMDS…KFDEALRESW (282 aa)). The segment at 778–784 (YMDSKMK) is G-loop. The tract at residues 916-924 (GIGDRHSDN) is catalytic loop. Residues 935–961 (HIDFGHILGNFKSKFGIKRERVPFILT) are activation loop. The residue at position 1070 (S1070) is a Phosphoserine; by autocatalysis.

Belongs to the PI3/PI4-kinase family. Heterodimer of a catalytic subunit PIK3CB and a p85 regulatory subunit (PIK3R1, PIK3R2 or PIK3R3). Interaction with PIK3R2 is required for nuclear localization and nuclear export. Part of a complex with PIK3R1 and PTEN. Binding to PTEN may antagonize the lipid kinase activity under normal growth conditions. Part of a complex involved in autophagosome formation composed of PIK3C3 and PIK3R4. Interacts with BECN1, ATG14 and RAB5A. In terms of processing, autophosphorylation at Ser-1070 negatively regulates the phosphatidylinositol-4,5-bisphosphate 3-kinase activity.

The protein resides in the cytoplasm. It is found in the nucleus. It carries out the reaction a 1,2-diacyl-sn-glycero-3-phospho-(1D-myo-inositol-4,5-bisphosphate) + ATP = a 1,2-diacyl-sn-glycero-3-phospho-(1D-myo-inositol-3,4,5-trisphosphate) + ADP + H(+). The enzyme catalyses 1-octadecanoyl-2-(5Z,8Z,11Z,14Z)-eicosatetraenoyl-sn-glycero-3-phospho-1D-myo-inositol 4,5-bisphosphate + ATP = 1-octadecanoyl-2-(5Z,8Z,11Z,14Z-eicosatetraenoyl)-sn-glycero-3-phospho-(1D-myo-inositol 3,4,5-triphosphate) + ADP + H(+). It catalyses the reaction L-seryl-[protein] + ATP = O-phospho-L-seryl-[protein] + ADP + H(+). It participates in phospholipid metabolism; phosphatidylinositol phosphate biosynthesis. Functionally, phosphoinositide-3-kinase (PI3K) phosphorylates phosphatidylinositol (PI) derivatives at position 3 of the inositol ring to produce 3-phosphoinositides. Uses ATP and PtdIns(4,5)P2 (phosphatidylinositol 4,5-bisphosphate) to generate phosphatidylinositol 3,4,5-trisphosphate (PIP3). PIP3 plays a key role by recruiting PH domain-containing proteins to the membrane, including AKT1 and PDPK1, activating signaling cascades involved in cell growth, survival, proliferation, motility and morphology. Involved in the activation of AKT1 upon stimulation by G-protein coupled receptors (GPCRs) ligands such as CXCL12, sphingosine 1-phosphate, and lysophosphatidic acid. May also act downstream receptor tyrosine kinases. Required in different signaling pathways for stable platelet adhesion and aggregation. Plays a role in platelet activation signaling triggered by GPCRs, alpha-IIb/beta-3 integrins (ITGA2B/ ITGB3) and ITAM (immunoreceptor tyrosine-based activation motif)-bearing receptors such as GP6. Regulates the strength of adhesion of ITGA2B/ ITGB3 activated receptors necessary for the cellular transmission of contractile forces. Required for platelet aggregation induced by F2 (thrombin) and thromboxane A2 (TXA2). Has a role in cell survival. May have a role in cell migration. Involved in the early stage of autophagosome formation. Modulates the intracellular level of PtdIns3P (phosphatidylinositol 3-phosphate) and activates PIK3C3 kinase activity. May act as a scaffold, independently of its lipid kinase activity to positively regulate autophagy. May have a role in insulin signaling as scaffolding protein in which the lipid kinase activity is not required. May have a kinase-independent function in regulating cell proliferation and in clathrin-mediated endocytosis. Mediator of oncogenic signal in cell lines lacking PTEN. The lipid kinase activity is necessary for its role in oncogenic transformation. Required for the growth of ERBB2 and RAS driven tumors. Also has a protein kinase activity showing autophosphorylation. In Rattus norvegicus (Rat), this protein is Phosphatidylinositol 4,5-bisphosphate 3-kinase catalytic subunit beta isoform (Pik3cb).